Consider the following 648-residue polypeptide: Acetyl-coenzyme A synthetase (648 aa).

CoA-binding positions include 191–194, Thr-310, and Asn-334; that span reads RGGR. ATP contacts are provided by residues 386–388, 410–415, Asp-499, and Arg-514; these read GEP and DTWWQT. Ser-522 is a binding site for CoA. Arg-525 provides a ligand contact to ATP. The Mg(2+) site is built by Val-536, His-538, and Ile-541. Arg-583 contacts CoA. Lys-608 bears the N6-acetyllysine mark.

Belongs to the ATP-dependent AMP-binding enzyme family. Requires Mg(2+) as cofactor. Post-translationally, acetylated. Deacetylation by the SIR2-homolog deacetylase activates the enzyme.

It carries out the reaction acetate + ATP + CoA = acetyl-CoA + AMP + diphosphate. Its function is as follows. Catalyzes the conversion of acetate into acetyl-CoA (AcCoA), an essential intermediate at the junction of anabolic and catabolic pathways. AcsA undergoes a two-step reaction. In the first half reaction, AcsA combines acetate with ATP to form acetyl-adenylate (AcAMP) intermediate. In the second half reaction, it can then transfer the acetyl group from AcAMP to the sulfhydryl group of CoA, forming the product AcCoA. The protein is Acetyl-coenzyme A synthetase of Aeromonas hydrophila subsp. hydrophila (strain ATCC 7966 / DSM 30187 / BCRC 13018 / CCUG 14551 / JCM 1027 / KCTC 2358 / NCIMB 9240 / NCTC 8049).